Here is a 187-residue protein sequence, read N- to C-terminus: 2-oxoglutarate synthase subunit KorC (187 aa).

Heterotetramer of the KorA, KorB, KorC and KorD subunits.

It carries out the reaction 2 oxidized [2Fe-2S]-[ferredoxin] + 2-oxoglutarate + CoA = succinyl-CoA + 2 reduced [2Fe-2S]-[ferredoxin] + CO2 + H(+). The protein is 2-oxoglutarate synthase subunit KorC (korC) of Methanocaldococcus jannaschii (strain ATCC 43067 / DSM 2661 / JAL-1 / JCM 10045 / NBRC 100440) (Methanococcus jannaschii).